We begin with the raw amino-acid sequence, 193 residues long: dCTP deaminase (193 aa).

DCTP contacts are provided by residues 110 to 115 (RSSLAR), D128, 136 to 138 (VLE), Y171, K178, and Q182. E138 functions as the Proton donor/acceptor in the catalytic mechanism.

It belongs to the dCTP deaminase family. As to quaternary structure, homotrimer.

The enzyme catalyses dCTP + H2O + H(+) = dUTP + NH4(+). The protein operates within pyrimidine metabolism; dUMP biosynthesis; dUMP from dCTP (dUTP route): step 1/2. Its function is as follows. Catalyzes the deamination of dCTP to dUTP. This is dCTP deaminase from Aeromonas salmonicida (strain A449).